A 101-amino-acid polypeptide reads, in one-letter code: Large ribosomal subunit protein bL21 (101 aa).

This sequence belongs to the bacterial ribosomal protein bL21 family. In terms of assembly, part of the 50S ribosomal subunit. Contacts protein L20.

Its function is as follows. This protein binds to 23S rRNA in the presence of protein L20. This Beutenbergia cavernae (strain ATCC BAA-8 / DSM 12333 / CCUG 43141 / JCM 11478 / NBRC 16432 / NCIMB 13614 / HKI 0122) protein is Large ribosomal subunit protein bL21.